The following is a 336-amino-acid chain: 4-aminobenzoate N-oxygenase (336 aa).

Y93 serves as a coordination point for 4-nitrobenzoate. 4 residues coordinate Fe cation: E101, E136, H139, and E196. Residue N200 coordinates 4-nitrobenzoate. Residues H223, E227, and H230 each contribute to the Fe cation site.

The protein belongs to the AurF N-oxygenase family. In terms of assembly, homodimer. Fe(2+) serves as cofactor.

The enzyme catalyses 4-aminobenzoate + AH2 + 2 O2 = 4-nitrobenzoate + A + 2 H2O. Its pathway is antibiotic biosynthesis. In terms of biological role, involved in the biosynthesis of the polyketide antibiotic aureothin. Catalyzes the oxidation of p-aminobenzoate (pABA) to p-nitrobenzoate (pNBA), an unusual polyketide synthase starter unit. Reaction mechanism involves the generation of a peroxodiiron(III/III) intermediate, which effects the initial oxidation of p-aminobenzoate to p-hydroxylaminobenzoate (Ar-NHOH). Ar-NHOH is then probably directly converted to the fully oxidized p-nitrobenzoate via a four-electron N-oxidation, bypassing the formation of a nitroso compound. The polypeptide is 4-aminobenzoate N-oxygenase (Streptomyces thioluteus).